Consider the following 1555-residue polypeptide: Protein TASOR (1555 aa).

5 disordered regions span residues 1–74 (MEEN…DKRA), 645–711 (QKKK…RQET), 744–773 (QNST…GQDQ), 870–911 (ALPN…TTPS), and 1390–1462 (NQGD…PTLD). The span at 35–47 (VQQTLKRTNSTES) shows a compositional bias: polar residues. Residues 61 to 71 (RRFQIPRKSRD) show a composition bias toward basic residues. Residues 667-688 (DRQSEKAWKHRKCEENVHHDNE) are compositionally biased toward basic and acidic residues. Composition is skewed to polar residues over residues 692–702 (SAQSLISSLGG) and 744–761 (QNST…LSQA). Residues 888–904 (PLHETERQRPRHDRDYC) show a composition bias toward basic and acidic residues. Residues 1402–1417 (SKEEEDMSLDSEDDTP) show a composition bias toward acidic residues. Residues 1448–1458 (ESPSTLNQGKT) are compositionally biased toward polar residues.

Belongs to the TASOR family. In terms of assembly, component of the HUSH complex.

It localises to the nucleus. The protein localises to the chromosome. Its function is as follows. Component of the HUSH complex, a multiprotein complex that mediates epigenetic repression. The HUSH complex is recruited to genomic loci rich in H3K9me3 and is probably required to maintain transcriptional silencing by promoting further deposition of H3K9me3. This Xenopus laevis (African clawed frog) protein is Protein TASOR.